A 78-amino-acid polypeptide reads, in one-letter code: Acyl carrier protein AcpP (78 aa).

The Carrier domain occupies 2-77; sequence SDTAERVKKI…DAVKYIDKAS (76 aa). Ser37 carries the O-(pantetheine 4'-phosphoryl)serine modification.

Belongs to the acyl carrier protein (ACP) family. Post-translationally, 4'-phosphopantetheine is transferred from CoA to a specific serine of apo-ACP by AcpS. This modification is essential for activity because fatty acids are bound in thioester linkage to the sulfhydryl of the prosthetic group.

It localises to the cytoplasm. It participates in lipid metabolism; fatty acid biosynthesis. Its function is as follows. Carrier of the growing fatty acid chain in fatty acid biosynthesis. In Mesorhizobium japonicum (strain LMG 29417 / CECT 9101 / MAFF 303099) (Mesorhizobium loti (strain MAFF 303099)), this protein is Acyl carrier protein AcpP.